The chain runs to 602 residues: mRNA-capping enzyme subunit beta (602 aa).

The segment at 1 to 249 is disordered; sequence MSEHHSKRAL…NESNSEETHD (249 aa). The segment covering 15–42 has biased composition (basic and acidic residues); that stretch reads LVNHDENDKSKLQKLADNESSVRSDDNR. Over residues 48 to 64 the composition is skewed to low complexity; the sequence is NIVNGNNSNSDLNSNGV. A compositionally biased stretch (acidic residues) spans 65-76; the sequence is IEEDTDTDDDVG. Positions 88-110 are enriched in basic and acidic residues; it reads DYDKQDRFSPEKKRIQARKKDTS. Positions 114 to 128 are enriched in low complexity; it reads PSISNESPSNSKESS. The segment covering 141-169 has biased composition (basic and acidic residues); sequence TDRKDSSEEKPDLTGPELVKEPDTNEYKR. Residues 171-181 show a composition bias toward polar residues; that stretch reads SIQSITNAEDT. Composition is skewed to basic and acidic residues over residues 213 to 222 and 231 to 249; these read TEEHKPKTET and QENKQKDNVNESNSEETHD. Residue Lys-276 is the N6-GMP-lysine intermediate of the active site.

It belongs to the fungal TPase family. In terms of assembly, heterodimer. The mRNA-capping enzyme is composed of two separate chains alpha and beta, respectively a mRNA guanylyltransferase and an mRNA 5'-triphosphate monophosphatase. Mg(2+) is required as a cofactor.

The protein resides in the nucleus. The enzyme catalyses a 5'-end triphospho-ribonucleoside in mRNA + H2O = a 5'-end diphospho-ribonucleoside in mRNA + phosphate + H(+). In terms of biological role, first step of mRNA capping. Converts the 5'-triphosphate end of a nascent mRNA chain into a diphosphate end. In Candida glabrata (strain ATCC 2001 / BCRC 20586 / JCM 3761 / NBRC 0622 / NRRL Y-65 / CBS 138) (Yeast), this protein is mRNA-capping enzyme subunit beta (CET1).